The sequence spans 490 residues: Cysteine--tRNA ligase (490 aa).

Cys43 provides a ligand contact to Zn(2+). Residues 45 to 55 (MTVQSSPHLGH) carry the 'HIGH' region motif. Residues 177 to 204 (VDEMSPAEDSDPRGKRDPRDFALWKGHK) are disordered. Residues 186–204 (SDPRGKRDPRDFALWKGHK) are compositionally biased toward basic and acidic residues. Residues Cys228, His253, and Glu257 each coordinate Zn(2+). The short motif at 284–288 (KMSKS) is the 'KMSKS' region element. Position 287 (Lys287) interacts with ATP.

This sequence belongs to the class-I aminoacyl-tRNA synthetase family. Monomer. Requires Zn(2+) as cofactor.

Its subcellular location is the cytoplasm. The enzyme catalyses tRNA(Cys) + L-cysteine + ATP = L-cysteinyl-tRNA(Cys) + AMP + diphosphate. In Cutibacterium acnes (strain DSM 16379 / KPA171202) (Propionibacterium acnes), this protein is Cysteine--tRNA ligase.